Here is a 371-residue protein sequence, read N- to C-terminus: Thyroid transcription factor 1 (371 aa).

A DNA-binding region (homeobox) is located at residues 161–220; that stretch reads RRKRRVLFSQAQVYELERRFKQQKYLSAPEREHLASMIHLTPTQVKIWFQNHRYKMKRQA. 2 disordered regions span residues 219 to 294 and 308 to 342; these read QAKD…QQQA and SGGP…ALQG. A compositionally biased stretch (gly residues) spans 233-243; the sequence is SGGGGGGGGAG. Low complexity-rich tracts occupy residues 244 to 253 and 272 to 294; these read CPQQQQAQQQ and AGAP…QQQA.

This sequence belongs to the NK-2 homeobox family. In terms of processing, phosphorylated on serine residues. Thyroid, lung and CNS.

It is found in the nucleus. In terms of biological role, transcription factor that binds and activates the promoter of thyroid specific genes such as thyroglobulin, thyroperoxidase, and thyrotropin receptor. Crucial in the maintenance of the thyroid differentiation phenotype. May play a role in lung development and surfactant homeostasis. In Canis lupus familiaris (Dog), this protein is Thyroid transcription factor 1 (TITF1).